We begin with the raw amino-acid sequence, 410 residues long: MGSSVYIMVELAIAVLAILGNVLVCWAVWINSNLQNVTNFFVVSLAAADIAVGVLAIPFAITISTGFCAACHGCLFFACFVLVLTQSSIFSLLAIAIDRYIAIRIPLRYNGLVTGMRAKGIIAICWVLSFAIGLTPMLGWNNCSQKDENSTKTCGEGRVTCLFEDVVPMNYMVYYNFFAFVLLPLLLMLAIYLRIFLAARRQLKQMESQPLPGERTRSTLQKEVHAAKSLAIIVGLFALCWLPLHIINCFTFFCSTCQHAPPWLMYLAIILSHSNSVVNPFIYAYRIREFRQTFRKIIRTHVLRRQEPFRAGGSSAWALAAHSTEGEQVSLRLNGHPLGVWANGSAPHSGRRPNGYTLGPGGGGSTQGSPGDVELLTQEHQEGQEHPGLGDHLAQGRVGTASWSSEFAPS.

Residues 1-4 (MGSS) are Extracellular-facing. The helical transmembrane segment at 5 to 29 (VYIMVELAIAVLAILGNVLVCWAVW) threads the bilayer. The Cytoplasmic portion of the chain corresponds to 30 to 39 (INSNLQNVTN). The helical transmembrane segment at 40 to 63 (FFVVSLAAADIAVGVLAIPFAITI) threads the bilayer. At 64 to 74 (STGFCAACHGC) the chain is on the extracellular side. 3 disulfide bridges follow: Cys-68–Cys-154, Cys-71–Cys-143, and Cys-74–Cys-161. Residues 75 to 97 (LFFACFVLVLTQSSIFSLLAIAI) form a helical membrane-spanning segment. The Cytoplasmic segment spans residues 98–117 (DRYIAIRIPLRYNGLVTGMR). The chain crosses the membrane as a helical span at residues 118-140 (AKGIIAICWVLSFAIGLTPMLGW). Over 141-168 (NNCSQKDENSTKTCGEGRVTCLFEDVVP) the chain is Extracellular. Residues Asn-142 and Asn-149 are each glycosylated (N-linked (GlcNAc...) asparagine). Glu-164 lines the adenosine pocket. The helical transmembrane segment at 169-193 (MNYMVYYNFFAFVLLPLLLMLAIYL) threads the bilayer. The Cytoplasmic segment spans residues 194–229 (RIFLAARRQLKQMESQPLPGERTRSTLQKEVHAAKS). Residues 230-253 (LAIIVGLFALCWLPLHIINCFTFF) traverse the membrane as a helical segment. Residue Asn-248 coordinates adenosine. Cys-254 and Cys-257 are oxidised to a cystine. Residues 254–261 (CSTCQHAP) are Extracellular-facing. The chain crosses the membrane as a helical span at residues 262-285 (PWLMYLAIILSHSNSVVNPFIYAY). Residues Ser-272 and His-273 each coordinate adenosine. At 286–410 (RIREFRQTFR…ASWSSEFAPS (125 aa)) the chain is on the cytoplasmic side. Positions 322–410 (HSTEGEQVSL…ASWSSEFAPS (89 aa)) are interaction with GAS2L2. The tract at residues 342-410 (ANGSAPHSGR…ASWSSEFAPS (69 aa)) is disordered. Over residues 377 to 389 (TQEHQEGQEHPGL) the composition is skewed to basic and acidic residues. Positions 401–410 (ASWSSEFAPS) are enriched in polar residues.

It belongs to the G-protein coupled receptor 1 family. As to quaternary structure, interacts (via cytoplasmic C-terminal domain) with USP4; the interaction is direct. May interact with DRD4. Interacts with NECAB2. Interacts (via cytoplasmic C-terminal domain) with GAS2L2; interaction enhances receptor-mediated adenylyl cyclase activity. Ubiquitinated. Deubiquitinated by USP4; leading to stabilization and expression at the cell surface.

It localises to the cell membrane. In terms of biological role, receptor for adenosine. The activity of this receptor is mediated by G proteins which activate adenylyl cyclase. The protein is Adenosine receptor A2a (Adora2a) of Mus musculus (Mouse).